We begin with the raw amino-acid sequence, 204 residues long: Guanylate kinase (204 aa).

In terms of domain architecture, Guanylate kinase-like spans 4-182; it reads GLLYVISAPS…ALNQLRAIVQ (179 aa). 11–18 contacts ATP; that stretch reads APSGAGKT.

It belongs to the guanylate kinase family.

It is found in the cytoplasm. It carries out the reaction GMP + ATP = GDP + ADP. In terms of biological role, essential for recycling GMP and indirectly, cGMP. The polypeptide is Guanylate kinase (Methylococcus capsulatus (strain ATCC 33009 / NCIMB 11132 / Bath)).